Reading from the N-terminus, the 204-residue chain is Small ribosomal subunit protein uS4 (204 aa).

Positions 95 to 157 (RRLDNTVFRM…KGIHSIIRHN (63 aa)) constitute an S4 RNA-binding domain.

It belongs to the universal ribosomal protein uS4 family. Part of the 30S ribosomal subunit. Contacts protein S5. The interaction surface between S4 and S5 is involved in control of translational fidelity.

One of the primary rRNA binding proteins, it binds directly to 16S rRNA where it nucleates assembly of the body of the 30S subunit. In terms of biological role, with S5 and S12 plays an important role in translational accuracy. This chain is Small ribosomal subunit protein uS4, found in Treponema pallidum (strain Nichols).